Consider the following 294-residue polypeptide: Major pollen allergen Pha a 5.3 (294 aa).

The signal sequence occupies residues 1–25 (MAVQKYTVALFLAMALVAGPAASYA).

This sequence belongs to the Poa p IX/Phl p VI allergen family.

The protein is Major pollen allergen Pha a 5.3 of Phalaris aquatica (Canary grass).